The chain runs to 362 residues: D-alanine--D-alanine ligase (362 aa).

The ATP-grasp domain maps to 153-357; that stretch reads KKIAREAGIP…YADLLTTLVS (205 aa). 180-235 contributes to the ATP binding site; sequence RELLGLPVFVKPARGGSSIGISKVDSWRDLPAAIEEAASHDPKVIIEAMITGPEVE. The Mg(2+) site is built by aspartate 312, glutamate 324, and asparagine 326.

This sequence belongs to the D-alanine--D-alanine ligase family. Mg(2+) is required as a cofactor. The cofactor is Mn(2+).

Its subcellular location is the cytoplasm. The catalysed reaction is 2 D-alanine + ATP = D-alanyl-D-alanine + ADP + phosphate + H(+). The protein operates within cell wall biogenesis; peptidoglycan biosynthesis. In terms of biological role, cell wall formation. The polypeptide is D-alanine--D-alanine ligase (Corynebacterium urealyticum (strain ATCC 43042 / DSM 7109)).